An 89-amino-acid chain; its full sequence is Large ribosomal subunit protein uL23cz/uL23cy (89 aa).

This sequence belongs to the universal ribosomal protein uL23 family. As to quaternary structure, part of the 50S ribosomal subunit.

It is found in the plastid. The protein localises to the chloroplast. Its function is as follows. Binds to 23S rRNA. In Calycanthus floridus var. glaucus (Eastern sweetshrub), this protein is Large ribosomal subunit protein uL23cz/uL23cy (rpl23-A).